The primary structure comprises 351 residues: uncharacterized protein (351 aa).

Residues 25-67 (KKAETETLPPANSQPAAPAPEAKPTEAPVAKAEAKPETPAQPV) form a disordered region. A compositionally biased stretch (low complexity) spans 33–55 (PPANSQPAAPAPEAKPTEAPVAK).

This is an uncharacterized protein from Escherichia coli (strain K12).